The primary structure comprises 381 residues: L-lactate dehydrogenase (381 aa).

An FMN hydroxy acid dehydrogenase domain is found at 1 to 380 (MIISASTDYR…SRDSLVRELG (380 aa)). Tyr24 lines the substrate pocket. Residues Ser106 and Gln127 each coordinate FMN. A substrate-binding site is contributed by Tyr129. Thr155 is a binding site for FMN. Residue Arg164 participates in substrate binding. An FMN-binding site is contributed by Lys251. His275 functions as the Proton acceptor in the catalytic mechanism. A substrate-binding site is contributed by Arg278. FMN is bound at residue 306 to 330 (DSGIRSGLDVVRMIALGADTVLIGR).

Belongs to the FMN-dependent alpha-hydroxy acid dehydrogenase family. In terms of assembly, homotetramer. FMN serves as cofactor.

The protein resides in the cell inner membrane. The catalysed reaction is (S)-lactate + A = pyruvate + AH2. Its function is as follows. Catalyzes the conversion of L-lactate to pyruvate. Is coupled to the respiratory chain. In Pseudomonas putida (strain W619), this protein is L-lactate dehydrogenase.